The following is a 63-amino-acid chain: Large ribosomal subunit protein uL30 (63 aa).

It belongs to the universal ribosomal protein uL30 family. In terms of assembly, part of the 50S ribosomal subunit.

The chain is Large ribosomal subunit protein uL30 from Xanthomonas axonopodis pv. citri (strain 306).